Here is a 426-residue protein sequence, read N- to C-terminus: Glutamate-1-semialdehyde 2,1-aminomutase (426 aa).

The residue at position 265 (Lys-265) is an N6-(pyridoxal phosphate)lysine.

The protein belongs to the class-III pyridoxal-phosphate-dependent aminotransferase family. HemL subfamily. Homodimer. Pyridoxal 5'-phosphate is required as a cofactor.

It localises to the cytoplasm. The enzyme catalyses (S)-4-amino-5-oxopentanoate = 5-aminolevulinate. It functions in the pathway porphyrin-containing compound metabolism; protoporphyrin-IX biosynthesis; 5-aminolevulinate from L-glutamyl-tRNA(Glu): step 2/2. This is Glutamate-1-semialdehyde 2,1-aminomutase from Salmonella choleraesuis (strain SC-B67).